We begin with the raw amino-acid sequence, 619 residues long: Protein CPn_1016/CP_0837/CPj1016/CpB1054 (619 aa).

Residues 591–619 (NAKKSEEQTSPQETPEVIRVSYPTTTSAL) form a disordered region.

The protein belongs to the chlamydial CPn_1016/CT_858/TC_0248 family.

The sequence is that of Protein CPn_1016/CP_0837/CPj1016/CpB1054 from Chlamydia pneumoniae (Chlamydophila pneumoniae).